The sequence spans 424 residues: Light-independent protochlorophyllide reductase subunit N (424 aa).

[4Fe-4S] cluster is bound by residues Cys26, Cys51, and Cys112.

Belongs to the BchN/ChlN family. Protochlorophyllide reductase is composed of three subunits; BchL, BchN and BchB. Forms a heterotetramer of two BchB and two BchN subunits. Requires [4Fe-4S] cluster as cofactor.

The catalysed reaction is chlorophyllide a + oxidized 2[4Fe-4S]-[ferredoxin] + 2 ADP + 2 phosphate = protochlorophyllide a + reduced 2[4Fe-4S]-[ferredoxin] + 2 ATP + 2 H2O. It participates in porphyrin-containing compound metabolism; bacteriochlorophyll biosynthesis (light-independent). Its function is as follows. Component of the dark-operative protochlorophyllide reductase (DPOR) that uses Mg-ATP and reduced ferredoxin to reduce ring D of protochlorophyllide (Pchlide) to form chlorophyllide a (Chlide). This reaction is light-independent. The NB-protein (BchN-BchB) is the catalytic component of the complex. This is Light-independent protochlorophyllide reductase subunit N from Rhodobacter capsulatus (strain ATCC BAA-309 / NBRC 16581 / SB1003).